The chain runs to 399 residues: Argininosuccinate synthase (399 aa).

An ATP-binding site is contributed by Ala9–Ser17. Tyr85 lines the L-citrulline pocket. ATP is bound at residue Gly115. 3 residues coordinate L-aspartate: Thr117, Asn121, and Asp122. Asn121 provides a ligand contact to L-citrulline. Arg125, Ser173, Glu258, and Tyr270 together coordinate L-citrulline.

The protein belongs to the argininosuccinate synthase family. Type 1 subfamily. As to quaternary structure, homotetramer.

It is found in the cytoplasm. The enzyme catalyses L-citrulline + L-aspartate + ATP = 2-(N(omega)-L-arginino)succinate + AMP + diphosphate + H(+). The protein operates within amino-acid biosynthesis; L-arginine biosynthesis; L-arginine from L-ornithine and carbamoyl phosphate: step 2/3. The chain is Argininosuccinate synthase from Streptococcus uberis (strain ATCC BAA-854 / 0140J).